We begin with the raw amino-acid sequence, 311 residues long: p-hydroxybenzoic acid efflux pump subunit AaeA (311 aa).

A helical transmembrane segment spans residues Val-11–Phe-31.

It belongs to the membrane fusion protein (MFP) (TC 8.A.1) family.

Its subcellular location is the cell inner membrane. Functionally, forms an efflux pump with AaeB. The sequence is that of p-hydroxybenzoic acid efflux pump subunit AaeA from Yersinia pseudotuberculosis serotype O:3 (strain YPIII).